Reading from the N-terminus, the 365-residue chain is PHD finger protein 6 (365 aa).

Position 2 is an N-acetylserine (Ser-2). 2 short sequence motifs (nuclear localization signal) span residues 13 to 16 (RQRK) and 129 to 133 (RKHKK). Residues 14–52 (QRKCGFCKSNRDKECGQLLISENQKVAAHHKCMLFSSAL) form a C2HC pre-PHD-type 1 zinc finger. The segment at 14 to 132 (QRKCGFCKSN…IYMVYCRKHK (119 aa)) is extended PHD1 domain (ePHD1). A PHD-type 1 zinc finger spans residues 80-132 (LMCSLCHCPGATIGCDVKTCHRTYHYHCALHDKAQIREKPSQGIYMVYCRKHK). 3 positions are modified to phosphoserine: Ser-138, Ser-145, and Ser-155. The tract at residues 139–211 (EADLEESFNE…RSSPSDTRPK (73 aa)) is disordered. The Nucleolar localization signal motif lies at 157–169 (KSKKKSRKGRPRK). Residues 157–171 (KSKKKSRKGRPRKTN) show a composition bias toward basic residues. Residue Lys-173 forms a Glycyl lysine isopeptide (Lys-Gly) (interchain with G-Cter in SUMO2) linkage. A phosphoserine mark is found at Ser-183 and Ser-199. Residues 209–249 (RPKCGFCHVGEEENQARGKLHIFNAKKAAAHYKCMLFSSGT) form a C2HC pre-PHD-type 2 zinc finger. Residues 209–330 (RPKCGFCHVG…IYKLYCKNHS (122 aa)) are extended PHD2 domain (ePHD2). Residue Lys-227 forms a Glycyl lysine isopeptide (Lys-Gly) (interchain with G-Cter in SUMO2) linkage. The PHD-type 2 zinc finger occupies 278–330 (MKCTLCSQPGATIGCEIKACVKTYHYHCGVQDKAKYIENMSRGIYKLYCKNHS). The segment at 330-365 (SGNDERDEEDEERESKSRGKVEIDQQQLTQQQLNGN) is disordered. Over residues 342-352 (RESKSRGKVEI) the composition is skewed to basic and acidic residues. The span at 354-365 (QQQLTQQQLNGN) shows a compositional bias: low complexity. The residue at position 358 (Thr-358) is a Phosphothreonine.

In terms of assembly, interacts with UBTF. Interacts with the NuRD complex component RBBP4 (via the nucleolar localization motif), the interaction mediates transcriptional repression activity.

The protein resides in the nucleus. Its subcellular location is the nucleolus. It localises to the chromosome. It is found in the centromere. The protein localises to the kinetochore. Transcriptional regulator that associates with ribosomal RNA promoters and suppresses ribosomal RNA (rRNA) transcription. The polypeptide is PHD finger protein 6 (PHF6) (Bos taurus (Bovine)).